The following is a 202-amino-acid chain: MSQNTLVLATGNAGKVAELRHMLSQTHATADWLVRPQSEWDFAEADETGTTFVENAIIKARHACQQTGLPAIADDSGLAVTALNGAPGVYSARYAGGNATDSDNINKLLKALEGVEESQRQASFHCVLVYMQSAEDPTPIICQGRWDGHILTHPVGEEGFGYDPVFWVKEKNCSAAQLSKTEKQALSHRGQALKQLLEQLAK.

Residue 10–15 (TGNAGK) coordinates substrate. D46 and D75 together coordinate Mg(2+). D75 acts as the Proton acceptor in catalysis. Substrate contacts are provided by residues S76, 160–163 (FGYD), K183, and 188–189 (HR).

Belongs to the HAM1 NTPase family. In terms of assembly, homodimer. Mg(2+) is required as a cofactor.

The enzyme catalyses XTP + H2O = XMP + diphosphate + H(+). It catalyses the reaction dITP + H2O = dIMP + diphosphate + H(+). It carries out the reaction ITP + H2O = IMP + diphosphate + H(+). In terms of biological role, pyrophosphatase that catalyzes the hydrolysis of nucleoside triphosphates to their monophosphate derivatives, with a high preference for the non-canonical purine nucleotides XTP (xanthosine triphosphate), dITP (deoxyinosine triphosphate) and ITP. Seems to function as a house-cleaning enzyme that removes non-canonical purine nucleotides from the nucleotide pool, thus preventing their incorporation into DNA/RNA and avoiding chromosomal lesions. The chain is dITP/XTP pyrophosphatase from Idiomarina loihiensis (strain ATCC BAA-735 / DSM 15497 / L2-TR).